The primary structure comprises 519 residues: Cyclin-dependent kinase C-1 (519 aa).

The 301-residue stretch at 25 to 325 folds into the Protein kinase domain; the sequence is FEKLEQIGEG…AQDALDAEYF (301 aa). Residues 31–39 and K54 each bind ATP; that span reads IGEGTYGQV. T35 is subject to Phosphothreonine. Y36 carries the phosphotyrosine modification. The active-site Proton acceptor is D164. Phosphothreonine is present on T198. Residues 336–348 show a composition bias toward basic and acidic residues; sequence SLPKYESSHEFQT. The interval 336 to 519 is disordered; sequence SLPKYESSHE…RNQQQYGNWQ (184 aa). The span at 426 to 444 shows a compositional bias: gly residues; it reads GNQGGGYPNRGGQGGGGSY. Residues 445 to 454 show a composition bias toward low complexity; it reads GNAPYPQQGR. Gly residues-rich tracts occupy residues 464-483 and 490-499; these read GMAG…GGGS and GPYGPSGPGR. Over residues 505 to 519 the composition is skewed to polar residues; the sequence is QQGGSRNQQQYGNWQ.

This sequence belongs to the protein kinase superfamily. CMGC Ser/Thr protein kinase family. CDC2/CDKX subfamily.

It catalyses the reaction L-seryl-[protein] + ATP = O-phospho-L-seryl-[protein] + ADP + H(+). The catalysed reaction is L-threonyl-[protein] + ATP = O-phospho-L-threonyl-[protein] + ADP + H(+). It carries out the reaction [DNA-directed RNA polymerase] + ATP = phospho-[DNA-directed RNA polymerase] + ADP + H(+). The protein is Cyclin-dependent kinase C-1 (CDKC-1) of Oryza sativa subsp. japonica (Rice).